We begin with the raw amino-acid sequence, 947 residues long: Translation initiation factor IF-2 (947 aa).

The interval 61–284 is disordered; sequence IQANQPAKNP…TAKNNKSHKI (224 aa). Over residues 151-169 the composition is skewed to basic and acidic residues; sequence QIEKAKQKLQEIQKSREAL. The segment covering 175–188 has biased composition (low complexity); sequence SNANNANSTNNANN. Basic and acidic residues predominate over residues 189-206; sequence AKKEISEVKKQEQEIKRH. Basic residues predominate over residues 207–218; the sequence is ENIKRRTGFRVI. The span at 247–262 shows a compositional bias: basic and acidic residues; that stretch reads EDIKKEWQEKDKQEAK. One can recognise a tr-type G domain in the interval 446–615; sequence ERPPVVTIMG…LIQADIMELK (170 aa). Residues 455 to 462 form a G1 region; it reads GHVDHGKT. 455–462 serves as a coordination point for GTP; the sequence is GHVDHGKT. A G2 region spans residues 480 to 484; that stretch reads GITQH. The segment at 501–504 is G3; the sequence is DTPG. GTP contacts are provided by residues 501 to 505 and 555 to 558; these read DTPGH and NKMD. Residues 555-558 form a G4 region; the sequence is NKMD. The interval 591–593 is G5; sequence SAK.

The protein belongs to the TRAFAC class translation factor GTPase superfamily. Classic translation factor GTPase family. IF-2 subfamily.

It is found in the cytoplasm. Functionally, one of the essential components for the initiation of protein synthesis. Protects formylmethionyl-tRNA from spontaneous hydrolysis and promotes its binding to the 30S ribosomal subunits. Also involved in the hydrolysis of GTP during the formation of the 70S ribosomal complex. The polypeptide is Translation initiation factor IF-2 (Helicobacter pylori (strain P12)).